Consider the following 299-residue polypeptide: NEDD8-activating enzyme E1 catalytic subunit (299 aa).

12-37 (GLGCEILKNLTMLSFVKQVHIVDIDT) contributes to the ATP binding site. Cysteine 168 acts as the Glycyl thioester intermediate in catalysis.

This sequence belongs to the ubiquitin-activating E1 family. UBA3 subfamily. Heterodimer of UBA3 and ULA1. Interacts with NEDD8 and UBC12.

It carries out the reaction ATP + [NEDD8 protein] + [E1 NEDD8-activating enzyme]-L-cysteine = AMP + diphosphate + [E1 NEDD8-activating enzyme]-S-[NEDD8 protein]-yl-L-cysteine.. Its pathway is protein modification; protein neddylation. Its function is as follows. Catalytic subunit of the dimeric UBA3-ULA1 E1 enzyme. E1 activates NEDD8/RUB1 by first adenylating its C-terminal glycine residue with ATP, thereafter linking this residue to the side chain of the catalytic cysteine, yielding a NEDD8-UBA3 thioester and free AMP. E1 finally transfers NEDD8 to the catalytic cysteine of UBC12. This chain is NEDD8-activating enzyme E1 catalytic subunit (UBA3), found in Saccharomyces cerevisiae (strain ATCC 204508 / S288c) (Baker's yeast).